The sequence spans 286 residues: Ribosome-inactivating protein beta-momorcharin (286 aa).

The first 23 residues, 1-23 (MVKCLLLSFLIIAIFIGVPTAKG), serve as a signal peptide directing secretion. N-linked (GlcNAc...) asparagine glycosylation occurs at Asn-74. Catalysis depends on residues Tyr-93, Tyr-132, Glu-181, and Arg-184.

The protein belongs to the ribosome-inactivating protein family. Type 1 RIP subfamily. In terms of processing, bound to a branched hexasaccharide.

It catalyses the reaction Endohydrolysis of the N-glycosidic bond at one specific adenosine on the 28S rRNA.. Irreversibly relaxes supercoiled DNA and catalyzes double-stranded breakage. Also acts as a ribosome inactivating protein. This chain is Ribosome-inactivating protein beta-momorcharin (MAP30), found in Momordica charantia (Bitter gourd).